The chain runs to 464 residues: Serine protease PepD (464 aa).

The segment at 1 to 71 (MAKLARVVGL…TQYRQPYEAL (71 aa)) is disordered. At 1–100 (MAKLARVVGL…GMVRQRPRAG (100 aa)) the chain is on the cytoplasmic side. The span at 39-48 (QGQQQTYSQQ) shows a compositional bias: low complexity. The helical transmembrane segment at 101 to 121 (MLAIGAVTIAVVSAGIGGAAA) threads the bilayer. Residues 122 to 464 (SLVGFNRAPA…VQVTLGKAEQ (343 aa)) lie on the Periplasmic side of the membrane. Active-site charge relay system residues include histidine 197, aspartate 236, and serine 317. In terms of domain architecture, PDZ spans 368 to 449 (LISTGKASHA…TVALTFQDPS (82 aa)).

Belongs to the peptidase S1C family. In terms of assembly, homotrimer. Interacts with numerous proteins, including the 35 kDa antigen PspA.

It is found in the cell inner membrane. It localises to the secreted. The protein localises to the cell wall. The enzyme catalyses Acts on substrates that are at least partially unfolded. The cleavage site P1 residue is normally between a pair of hydrophobic residues, such as Val-|-Val.. Its activity is regulated as follows. Probably regulates its own activity by autocleavage, which removes the PDZ domain. Inhibited by the serine protease inhibitor diisopropylfluorophosphate (DFP). Inhibited by fluoroquinolone such as ciprofloxacin, moxifloxacin and ofloxacin and their analogs. Functionally, required for virulence. Acts both as a protease, which degrades and/or refolds damaged substrate targets, and as a chaperone. Plays an important role in the stress response network mediated through the two-component regulatory system MprAB and SigE signaling networks. May utilize its PDZ domain to recognize and process misfolded proteins at the cell membrane, leading to activation of the MprAB and SigE signaling pathways and subsequent establishment of a positive feedback loop that facilitates bacterial adaptation. Interacts with and potentially cleaves several proteins, including the 35 kDa antigen PspA. Proteolytic cleavage of PspA may help to maintain cell envelope homeostasis in Mycobacterium and regulate specific stress response pathways during periods of extracytoplasmic stress. In vitro, exhibits proteolytic activity against the artificial substrate beta-casein. The polypeptide is Serine protease PepD (Mycobacterium tuberculosis (strain ATCC 25618 / H37Rv)).